An 830-amino-acid polypeptide reads, in one-letter code: Receptor-like protein kinase HERK 1 (830 aa).

The signal sequence occupies residues Met1 to Gly24. At Phe25 to Gly405 the chain is on the extracellular side. Asn40, Asn146, Asn217, Asn280, and Asn381 each carry an N-linked (GlcNAc...) asparagine glycan. Residues Leu406–Val426 form a helical membrane-spanning segment. Over Leu427 to Arg830 the chain is Cytoplasmic. The Protein kinase domain occupies Phe485–Ala758. Residues Ile491–Val499 and Lys513 contribute to the ATP site. The active-site Proton acceptor is Asp609.

This sequence belongs to the protein kinase superfamily. Ser/Thr protein kinase family. Autophosphorylated. In terms of tissue distribution, expressed in most vegetative tissues, including leaves, stems and roots, especially in cell elongation regions.

The protein localises to the cell membrane. In terms of biological role, receptor-like protein kinase required for cell elongation during vegetative growth, mostly in a brassinosteroid-(BR-) independent manner. This is Receptor-like protein kinase HERK 1 (HERK1) from Arabidopsis thaliana (Mouse-ear cress).